The primary structure comprises 177 residues: Large ribosomal subunit protein uL6 (177 aa).

It belongs to the universal ribosomal protein uL6 family. Part of the 50S ribosomal subunit.

Functionally, this protein binds to the 23S rRNA, and is important in its secondary structure. It is located near the subunit interface in the base of the L7/L12 stalk, and near the tRNA binding site of the peptidyltransferase center. The chain is Large ribosomal subunit protein uL6 from Pseudomonas entomophila (strain L48).